Reading from the N-terminus, the 410-residue chain is WD repeat-containing protein jip5 (410 aa).

6 WD repeats span residues P9–H48, R74–K113, A119–A160, V223–E264, G273–E316, and D320–E357. Residues P41–H65 form a disordered region. A compositionally biased stretch (acidic residues) spans E43–Q53. The interval I354–D410 is disordered. The segment covering D364 to D376 has biased composition (acidic residues). The segment covering H377–R386 has biased composition (basic and acidic residues).

It belongs to the WD repeat WDR55 family.

It localises to the nucleus. It is found in the nucleolus. The chain is WD repeat-containing protein jip5 (jip5) from Emericella nidulans (strain FGSC A4 / ATCC 38163 / CBS 112.46 / NRRL 194 / M139) (Aspergillus nidulans).